Reading from the N-terminus, the 70-residue chain is Large ribosomal subunit protein uL29 (70 aa).

It belongs to the universal ribosomal protein uL29 family.

This Prochlorococcus marinus (strain MIT 9211) protein is Large ribosomal subunit protein uL29.